A 727-amino-acid chain; its full sequence is DNA replication licensing factor MCM5 (727 aa).

The region spanning valine 325–isoleucine 531 is the MCM domain. An ATP-binding site is contributed by glycine 375–serine 382. Residues serine 507–aspartate 510 carry the Arginine finger motif.

The protein belongs to the MCM family. Component of the minichromosome maintenance (MCM) complex, a heterotetramer composed of MCM2, MCM3, MCM4, MCM5, MCM6 and MCM7. Interacts with EGT1. In terms of tissue distribution, expressed in shoot apex and flower buds.

The protein localises to the nucleus. The protein resides in the cytoplasm. It carries out the reaction ATP + H2O = ADP + phosphate + H(+). Its function is as follows. Probable component of the MCM2-7 complex (MCM complex) that may function as a DNA helicase and which is essential to undergo a single round of replication initiation and elongation per cell cycle in eukaryotic cells. This is DNA replication licensing factor MCM5 (MCM5) from Arabidopsis thaliana (Mouse-ear cress).